A 106-amino-acid chain; its full sequence is Thioredoxin-like protein YdbP (106 aa).

The Thioredoxin domain maps to 1–106; that stretch reads MKKITTNEQF…VTEFLSEHIS (106 aa). The cysteines at positions 29 and 32 are disulfide-linked.

This sequence belongs to the thioredoxin family.

In terms of biological role, participates in various redox reactions through the reversible oxidation of its active center dithiol to a disulfide and catalyzes dithiol-disulfide exchange reactions. The polypeptide is Thioredoxin-like protein YdbP (ydbP) (Bacillus subtilis (strain 168)).